A 216-amino-acid chain; its full sequence is uncharacterized protein (216 aa).

A helical transmembrane segment spans residues 7–29; it reads ILVIFFLIFFIGFEFSDMTLAFI.

Its subcellular location is the membrane. This is an uncharacterized protein from Archaeoglobus fulgidus (strain ATCC 49558 / DSM 4304 / JCM 9628 / NBRC 100126 / VC-16).